Here is a 274-residue protein sequence, read N- to C-terminus: tRNA-cytidine(32) 2-sulfurtransferase (274 aa).

The short motif at 40–45 (SGGKDS) is the PP-loop motif element. Residues cysteine 115, cysteine 118, and cysteine 206 each contribute to the [4Fe-4S] cluster site.

This sequence belongs to the TtcA family. As to quaternary structure, homodimer. Mg(2+) serves as cofactor. The cofactor is [4Fe-4S] cluster.

It is found in the cytoplasm. It carries out the reaction cytidine(32) in tRNA + S-sulfanyl-L-cysteinyl-[cysteine desulfurase] + AH2 + ATP = 2-thiocytidine(32) in tRNA + L-cysteinyl-[cysteine desulfurase] + A + AMP + diphosphate + H(+). The protein operates within tRNA modification. Catalyzes the ATP-dependent 2-thiolation of cytidine in position 32 of tRNA, to form 2-thiocytidine (s(2)C32). The sulfur atoms are provided by the cysteine/cysteine desulfurase (IscS) system. The sequence is that of tRNA-cytidine(32) 2-sulfurtransferase from Pseudomonas putida (strain W619).